The primary structure comprises 56 residues: Small ribosomal subunit protein uS14 (56 aa).

Ser9 is modified (phosphoserine). Arg12 is modified (omega-N-methylarginine). Positions 21, 24, 39, and 42 each coordinate Zn(2+). At Lys48 the chain carries N6-acetyllysine.

Belongs to the universal ribosomal protein uS14 family. In terms of assembly, component of the 40S small ribosomal subunit. Zn(2+) serves as cofactor.

It localises to the cytoplasm. The protein localises to the cytosol. It is found in the rough endoplasmic reticulum. Its function is as follows. Component of the small ribosomal subunit. The ribosome is a large ribonucleoprotein complex responsible for the synthesis of proteins in the cell. The sequence is that of Small ribosomal subunit protein uS14 (RPS29) from Sus scrofa (Pig).